The chain runs to 206 residues: 2,3-bisphosphoglycerate-dependent phosphoglycerate mutase (206 aa).

Residues 9–16 (RHGQSEWN), 22–23 (TG), Arg61, 88–91 (ERNY), Lys99, 115–116 (RR), and 159–160 (GN) each bind substrate. His10 functions as the Tele-phosphohistidine intermediate in the catalytic mechanism. Catalysis depends on Glu88, which acts as the Proton donor/acceptor.

Belongs to the phosphoglycerate mutase family. BPG-dependent PGAM subfamily. As to quaternary structure, homodimer.

The enzyme catalyses (2R)-2-phosphoglycerate = (2R)-3-phosphoglycerate. Its pathway is carbohydrate degradation; glycolysis; pyruvate from D-glyceraldehyde 3-phosphate: step 3/5. Catalyzes the interconversion of 2-phosphoglycerate and 3-phosphoglycerate. The sequence is that of 2,3-bisphosphoglycerate-dependent phosphoglycerate mutase from Bartonella henselae (strain ATCC 49882 / DSM 28221 / CCUG 30454 / Houston 1) (Rochalimaea henselae).